The chain runs to 311 residues: Methionyl-tRNA formyltransferase (311 aa).

110–113 provides a ligand contact to (6S)-5,6,7,8-tetrahydrofolate; it reads SLLP.

It belongs to the Fmt family.

It carries out the reaction L-methionyl-tRNA(fMet) + (6R)-10-formyltetrahydrofolate = N-formyl-L-methionyl-tRNA(fMet) + (6S)-5,6,7,8-tetrahydrofolate + H(+). In terms of biological role, attaches a formyl group to the free amino group of methionyl-tRNA(fMet). The formyl group appears to play a dual role in the initiator identity of N-formylmethionyl-tRNA by promoting its recognition by IF2 and preventing the misappropriation of this tRNA by the elongation apparatus. The polypeptide is Methionyl-tRNA formyltransferase (Streptococcus pyogenes serotype M49 (strain NZ131)).